The following is a 227-amino-acid chain: Octanoyltransferase (227 aa).

In terms of domain architecture, BPL/LPL catalytic spans 31 to 209 (ANTIDEIWLV…VFLSLLGGTN (179 aa)). Substrate contacts are provided by residues 71–78 (RGGKITYH), 139–141 (SIG), and 152–154 (GLA). The active-site Acyl-thioester intermediate is C170.

This sequence belongs to the LipB family.

It is found in the cytoplasm. The enzyme catalyses octanoyl-[ACP] + L-lysyl-[protein] = N(6)-octanoyl-L-lysyl-[protein] + holo-[ACP] + H(+). Its pathway is protein modification; protein lipoylation via endogenous pathway; protein N(6)-(lipoyl)lysine from octanoyl-[acyl-carrier-protein]: step 1/2. Functionally, catalyzes the transfer of endogenously produced octanoic acid from octanoyl-acyl-carrier-protein onto the lipoyl domains of lipoate-dependent enzymes. Lipoyl-ACP can also act as a substrate although octanoyl-ACP is likely to be the physiological substrate. The chain is Octanoyltransferase from Baumannia cicadellinicola subsp. Homalodisca coagulata.